The primary structure comprises 586 residues: Phosphoenolpyruvate-protein phosphotransferase (586 aa).

Histidine 201 serves as the catalytic Tele-phosphohistidine intermediate. Arginine 308 and arginine 345 together coordinate phosphoenolpyruvate. Residues glutamate 446 and aspartate 470 each coordinate Mg(2+). Residues 469 to 470 (ND) and arginine 480 each bind phosphoenolpyruvate. Residue cysteine 517 is the Proton donor of the active site.

The protein belongs to the PEP-utilizing enzyme family. In terms of assembly, homodimer. It depends on Mg(2+) as a cofactor.

The protein resides in the cytoplasm. The catalysed reaction is L-histidyl-[protein] + phosphoenolpyruvate = N(pros)-phospho-L-histidyl-[protein] + pyruvate. Functionally, general (non sugar-specific) component of the phosphoenolpyruvate-dependent sugar phosphotransferase system (sugar PTS). This major carbohydrate active-transport system catalyzes the phosphorylation of incoming sugar substrates concomitantly with their translocation across the cell membrane. Enzyme I transfers the phosphoryl group from phosphoenolpyruvate (PEP) to the phosphoryl carrier protein (HPr). This chain is Phosphoenolpyruvate-protein phosphotransferase, found in Cupriavidus necator (strain ATCC 17699 / DSM 428 / KCTC 22496 / NCIMB 10442 / H16 / Stanier 337) (Ralstonia eutropha).